Reading from the N-terminus, the 1093-residue chain is Mediator of RNA polymerase II transcription subunit 14 (1093 aa).

Disordered stretches follow at residues 1-61 and 1035-1060; these read MPGV…KIDG and TKSD…SQAA. Residues 19-31 are compositionally biased toward polar residues; it reads DTQTPSNGDNLRN. Residues 41–61 show a composition bias toward basic and acidic residues; sequence KGDKDHDPDKESYTGKPKIDG. A compositionally biased stretch (polar residues) spans 1040 to 1056; the sequence is DYSTQPVPEKQSQTGAP.

The protein belongs to the Mediator complex subunit 14 family. Component of the Mediator complex.

The protein resides in the nucleus. Component of the Mediator complex, a coactivator involved in the regulated transcription of nearly all RNA polymerase II-dependent genes. Mediator functions as a bridge to convey information from gene-specific regulatory proteins to the basal RNA polymerase II transcription machinery. Mediator is recruited to promoters by direct interactions with regulatory proteins and serves as a scaffold for the assembly of a functional preinitiation complex with RNA polymerase II and the general transcription factors. The protein is Mediator of RNA polymerase II transcription subunit 14 (rgr1) of Neosartorya fischeri (strain ATCC 1020 / DSM 3700 / CBS 544.65 / FGSC A1164 / JCM 1740 / NRRL 181 / WB 181) (Aspergillus fischerianus).